The chain runs to 296 residues: Sulfotransferase 1E1 (296 aa).

49–54 contacts 3'-phosphoadenylyl sulfate; the sequence is KSGTTW. 107–109 is a substrate binding site; the sequence is KTH. His109 functions as the Proton acceptor in the catalytic mechanism. 3'-phosphoadenylyl sulfate contacts are provided by residues Arg131, Ser139, Tyr194, 228–233, and 258–260; these read TSFQEM and RKG.

This sequence belongs to the sulfotransferase 1 family. Homodimer. The N-terminus is blocked. In terms of tissue distribution, adrenal gland and much less in liver. Detectable only during pregnancy in uterine.

It localises to the cytoplasm. The protein localises to the cytosol. It catalyses the reaction estrone + 3'-phosphoadenylyl sulfate = estrone 3-sulfate + adenosine 3',5'-bisphosphate + H(+). It carries out the reaction (24S)-hydroxycholesterol + 3'-phosphoadenylyl sulfate = (24S)-hydroxycholesterol 3-sulfate + adenosine 3',5'-bisphosphate + H(+). The enzyme catalyses 17beta-estradiol + 3'-phosphoadenylyl sulfate = 17beta-estradiol 3-sulfate + adenosine 3',5'-bisphosphate + H(+). The catalysed reaction is 3beta-hydroxyandrost-5-en-17-one + 3'-phosphoadenylyl sulfate = dehydroepiandrosterone 3-sulfate + adenosine 3',5'-bisphosphate + H(+). It catalyses the reaction 4-ethylphenol + 3'-phosphoadenylyl sulfate = 4-ethylphenyl sulfate + adenosine 3',5'-bisphosphate + H(+). Its activity is regulated as follows. Inhibited by estradiol. In terms of biological role, sulfotransferase that utilizes 3'-phospho-5'-adenylyl sulfate (PAPS) as sulfonate donor to catalyze the sulfate conjugation of estradiol and estrone. Is a key enzyme in estrogen homeostasis, the sulfation of estrogens leads to their inactivation. Also sulfates dehydroepiandrosterone (DHEA), pregnenolone, (24S)-hydroxycholesteroland xenobiotic compounds like ethinylestradiol, equalenin, diethyl stilbesterol and 1-naphthol at significantly lower efficiency. Does not sulfonate cortisol, testosterone and dopamine. May play a role in gut microbiota-host metabolic interaction. O-sulfonates 4-ethylphenol (4-EP), a dietary tyrosine-derived metabolite produced by gut bacteria. The product 4-EPS crosses the blood-brain barrier and may negatively regulate oligodendrocyte maturation and myelination, affecting the functional connectivity of different brain regions associated with the limbic system. The sequence is that of Sulfotransferase 1E1 (SULT1E1) from Cavia porcellus (Guinea pig).